Reading from the N-terminus, the 154-residue chain is Ribosome maturation factor RimP (154 aa).

The protein belongs to the RimP family.

Its subcellular location is the cytoplasm. In terms of biological role, required for maturation of 30S ribosomal subunits. This is Ribosome maturation factor RimP from Salmonella agona (strain SL483).